A 260-amino-acid chain; its full sequence is Flagellar basal-body rod protein FlgG (260 aa).

It belongs to the flagella basal body rod proteins family. As to quaternary structure, the basal body constitutes a major portion of the flagellar organelle and consists of four rings (L,P,S, and M) mounted on a central rod. The rod consists of about 26 subunits of FlgG in the distal portion, and FlgB, FlgC and FlgF are thought to build up the proximal portion of the rod with about 6 subunits each.

It localises to the bacterial flagellum basal body. The sequence is that of Flagellar basal-body rod protein FlgG (flgG) from Salmonella typhi.